The sequence spans 199 residues: 3-isopropylmalate dehydratase small subunit (199 aa).

The protein belongs to the LeuD family. LeuD type 1 subfamily. Heterodimer of LeuC and LeuD.

It catalyses the reaction (2R,3S)-3-isopropylmalate = (2S)-2-isopropylmalate. It participates in amino-acid biosynthesis; L-leucine biosynthesis; L-leucine from 3-methyl-2-oxobutanoate: step 2/4. Functionally, catalyzes the isomerization between 2-isopropylmalate and 3-isopropylmalate, via the formation of 2-isopropylmaleate. The chain is 3-isopropylmalate dehydratase small subunit from Tolumonas auensis (strain DSM 9187 / NBRC 110442 / TA 4).